Consider the following 612-residue polypeptide: UvrABC system protein C (612 aa).

A GIY-YIG domain is found at 21–99; it reads KLPGVYQMYD…IKSQKPPFNI (79 aa). The UVR domain maps to 209–244; it reads EVLQQELQVEMEQASQALDFERAVVVRDQITDLRQV.

The protein belongs to the UvrC family. Interacts with UvrB in an incision complex.

Its subcellular location is the cytoplasm. Its function is as follows. The UvrABC repair system catalyzes the recognition and processing of DNA lesions. UvrC both incises the 5' and 3' sides of the lesion. The N-terminal half is responsible for the 3' incision and the C-terminal half is responsible for the 5' incision. The protein is UvrABC system protein C of Saccharophagus degradans (strain 2-40 / ATCC 43961 / DSM 17024).